The chain runs to 946 residues: Translation initiation factor IF-2 (946 aa).

2 disordered regions span residues 58–250 (AERK…AVVI) and 301–324 (VSRD…KSLS). 2 stretches are compositionally biased toward low complexity: residues 102 to 165 (EPPQ…QPAA) and 174 to 185 (AQPSAPQPAAAQ). Residues 186 to 211 (PRPPQPPMPSRPPPAGYRPAPPPGAR) show a composition bias toward pro residues. The segment covering 212–229 (PPMSAAPGAPAQPGAAAQ) has biased composition (low complexity). The tr-type G domain occupies 445 to 614 (IRPPVVTVMG…ALQSEVLELK (170 aa)). Positions 454-461 (GHVDHGKT) are G1. 454 to 461 (GHVDHGKT) is a GTP binding site. The segment at 479 to 483 (GITQH) is G2. Residues 500–503 (DTPG) are G3. Residues 500–504 (DTPGH) and 554–557 (NKVD) each bind GTP. The segment at 554 to 557 (NKVD) is G4. The interval 590–592 (SAR) is G5.

It belongs to the TRAFAC class translation factor GTPase superfamily. Classic translation factor GTPase family. IF-2 subfamily.

The protein localises to the cytoplasm. In terms of biological role, one of the essential components for the initiation of protein synthesis. Protects formylmethionyl-tRNA from spontaneous hydrolysis and promotes its binding to the 30S ribosomal subunits. Also involved in the hydrolysis of GTP during the formation of the 70S ribosomal complex. The chain is Translation initiation factor IF-2 from Anaeromyxobacter sp. (strain K).